A 290-amino-acid polypeptide reads, in one-letter code: Taxis protein CheF1 (290 aa).

As to quaternary structure, interacts with chemotaxis (Che) proteins as well as flagella accessory (Fla) proteins.

Functionally, involved in taxis signal transduction. Essential for the ability to control the direction of flagellar rotation. May have a role between CheY and the flagellum. This Halobacterium salinarum (strain ATCC 29341 / DSM 671 / R1) protein is Taxis protein CheF1 (cheF1).